The chain runs to 90 residues: Inactive casein kinase II subunit alpha-2 (90 aa).

Residues 40-48 (VGRGKYSEV) and Lys63 each bind ATP.

Belongs to the protein kinase superfamily. Ser/Thr protein kinase family. CK2 subfamily.

In terms of biological role, the Nipponbare allele of HD6 contains a premature stop codon, resulting in a truncated non-functional product. This is Inactive casein kinase II subunit alpha-2 from Oryza sativa subsp. japonica (Rice).